The primary structure comprises 245 residues: tRNA pseudouridine synthase A (245 aa).

The active-site Nucleophile is the aspartate 52. Substrate is bound at residue tyrosine 111.

This sequence belongs to the tRNA pseudouridine synthase TruA family. In terms of assembly, homodimer.

The catalysed reaction is uridine(38/39/40) in tRNA = pseudouridine(38/39/40) in tRNA. In terms of biological role, formation of pseudouridine at positions 38, 39 and 40 in the anticodon stem and loop of transfer RNAs. This chain is tRNA pseudouridine synthase A, found in Rickettsia typhi (strain ATCC VR-144 / Wilmington).